The following is a 190-amino-acid chain: Small ribosomal subunit protein eS7 (190 aa).

Belongs to the eukaryotic ribosomal protein eS7 family.

The sequence is that of Small ribosomal subunit protein eS7 (RpS7) from Manduca sexta (Tobacco hawkmoth).